Reading from the N-terminus, the 511-residue chain is GATOR complex protein NPRL3 (511 aa).

A disordered region spans residues 37–58 (KPATKAPSKDPQPSSSNPGQCV).

This sequence belongs to the NPR3 family. In terms of assembly, probably part of the GATOR complex.

It localises to the lysosome membrane. Functionally, as a component of the GATOR complex may function in the amino acid-sensing branch of the TORC1 signaling pathway. This Caenorhabditis elegans protein is GATOR complex protein NPRL3 (nprl-3).